We begin with the raw amino-acid sequence, 177 residues long: MKSLAVAKRYASALFELAREKGAIDSISHDFEVLEKAIQETPDVKKVLDNPVLIPAAKKELLEKLFPDFNPITKSFLKLLVDKRREVYLPEIIALFAEKLREERGEMLVEVESARELKGDLSDLIKEKLSRLTGKKVTMKVRTNPDLIGGIVVRVGNKVYDGSIKNQLYRLKRSIYG.

This sequence belongs to the ATPase delta chain family. F-type ATPases have 2 components, F(1) - the catalytic core - and F(0) - the membrane proton channel. F(1) has five subunits: alpha(3), beta(3), gamma(1), delta(1), epsilon(1). F(0) has three main subunits: a(1), b(2) and c(10-14). The alpha and beta chains form an alternating ring which encloses part of the gamma chain. F(1) is attached to F(0) by a central stalk formed by the gamma and epsilon chains, while a peripheral stalk is formed by the delta and b chains.

Its subcellular location is the cell membrane. F(1)F(0) ATP synthase produces ATP from ADP in the presence of a proton or sodium gradient. F-type ATPases consist of two structural domains, F(1) containing the extramembraneous catalytic core and F(0) containing the membrane proton channel, linked together by a central stalk and a peripheral stalk. During catalysis, ATP synthesis in the catalytic domain of F(1) is coupled via a rotary mechanism of the central stalk subunits to proton translocation. In terms of biological role, this protein is part of the stalk that links CF(0) to CF(1). It either transmits conformational changes from CF(0) to CF(1) or is implicated in proton conduction. In Carboxydothermus hydrogenoformans (strain ATCC BAA-161 / DSM 6008 / Z-2901), this protein is ATP synthase subunit delta.